Reading from the N-terminus, the 270-residue chain is 5'-nucleotidase SurE (270 aa).

Residues Asp14, Asp15, Ser46, and Asn104 each coordinate a divalent metal cation.

Belongs to the SurE nucleotidase family. A divalent metal cation serves as cofactor.

Its subcellular location is the cytoplasm. The catalysed reaction is a ribonucleoside 5'-phosphate + H2O = a ribonucleoside + phosphate. In terms of biological role, nucleotidase that shows phosphatase activity on nucleoside 5'-monophosphates. The polypeptide is 5'-nucleotidase SurE (Microcystis aeruginosa (strain NIES-843 / IAM M-2473)).